A 311-amino-acid polypeptide reads, in one-letter code: Methionyl-tRNA formyltransferase (311 aa).

112-115 (SLLP) serves as a coordination point for (6S)-5,6,7,8-tetrahydrofolate.

The protein belongs to the Fmt family.

It carries out the reaction L-methionyl-tRNA(fMet) + (6R)-10-formyltetrahydrofolate = N-formyl-L-methionyl-tRNA(fMet) + (6S)-5,6,7,8-tetrahydrofolate + H(+). Functionally, attaches a formyl group to the free amino group of methionyl-tRNA(fMet). The formyl group appears to play a dual role in the initiator identity of N-formylmethionyl-tRNA by promoting its recognition by IF2 and preventing the misappropriation of this tRNA by the elongation apparatus. The polypeptide is Methionyl-tRNA formyltransferase (Geobacter metallireducens (strain ATCC 53774 / DSM 7210 / GS-15)).